We begin with the raw amino-acid sequence, 362 residues long: Histidine protein methyltransferase 1 homolog (362 aa).

Residues 28–89 are disordered; the sequence is KSQKGKEDKN…ACEKQPSLKP (62 aa). Polar residues predominate over residues 55–73; sequence SLGSAASSEDTDSPPSTAD. 2 positions are modified to phosphoserine: S62 and S67. At H144 the chain carries Tele-methylhistidine. Residues 158-162, G185, and 206-208 each bind S-adenosyl-L-methionine; these read IWECT and QDY. A Nuclear localization signal motif is present at residues 237-243; sequence PAGKRQR. S-adenosyl-L-methionine is bound by residues 259–261 and S283; that span reads GEW.

It belongs to the methyltransferase superfamily. METTL18 family. Interacts with GRWD1 and members of the heat shock protein 90 and 70 families; these proteins may possibly be methylation substrates for the enzyme. Monomethylated at His-144 through automethylation. Automethylation at His-144 positively regulates the methyltransferase activity toward RPL3. Probably methylated on other residues.

It localises to the cytoplasm. The protein localises to the cytosol. Its subcellular location is the nucleus. The protein resides in the nucleolus. It catalyses the reaction L-histidyl-[protein] + S-adenosyl-L-methionine = N(tele)-methyl-L-histidyl-[protein] + S-adenosyl-L-homocysteine + H(+). Its function is as follows. Protein-L-histidine N-tele-methyltransferase that specifically monomethylates RPL3, thereby regulating translation elongation. Histidine methylation of RPL3 regulates translation elongation by slowing ribosome traversal on tyrosine codons: slower elongation provides enough time for proper folding of synthesized proteins and prevents cellular aggregation of tyrosine-rich proteins. In Rattus norvegicus (Rat), this protein is Histidine protein methyltransferase 1 homolog.